The primary structure comprises 258 residues: UPF0246 protein Pnuc_0753 (258 aa).

The protein belongs to the UPF0246 family.

This chain is UPF0246 protein Pnuc_0753, found in Polynucleobacter asymbioticus (strain DSM 18221 / CIP 109841 / QLW-P1DMWA-1) (Polynucleobacter necessarius subsp. asymbioticus).